A 212-amino-acid chain; its full sequence is Peptide methionine sulfoxide reductase MsrA (212 aa).

The active site involves C52.

It belongs to the MsrA Met sulfoxide reductase family.

The catalysed reaction is L-methionyl-[protein] + [thioredoxin]-disulfide + H2O = L-methionyl-(S)-S-oxide-[protein] + [thioredoxin]-dithiol. It carries out the reaction [thioredoxin]-disulfide + L-methionine + H2O = L-methionine (S)-S-oxide + [thioredoxin]-dithiol. Has an important function as a repair enzyme for proteins that have been inactivated by oxidation. Catalyzes the reversible oxidation-reduction of methionine sulfoxide in proteins to methionine. The sequence is that of Peptide methionine sulfoxide reductase MsrA from Salmonella schwarzengrund (strain CVM19633).